Here is a 72-residue protein sequence, read N- to C-terminus: MANYYRKRVSPIKPGDPIDYKDVELLKKYITERGKIMPRRITGLTSKQQRDLTKSIKRARLVALLPYVNKES.

The protein belongs to the bacterial ribosomal protein bS18 family. In terms of assembly, part of the 30S ribosomal subunit. Forms a tight heterodimer with protein bS6.

Binds as a heterodimer with protein bS6 to the central domain of the 16S rRNA, where it helps stabilize the platform of the 30S subunit. This is Small ribosomal subunit protein bS18 from Trichodesmium erythraeum (strain IMS101).